Here is a 315-residue protein sequence, read N- to C-terminus: Transaldolase (315 aa).

Lysine 125 acts as the Schiff-base intermediate with substrate in catalysis.

It belongs to the transaldolase family. Type 1 subfamily. Homodimer.

It is found in the cytoplasm. The catalysed reaction is D-sedoheptulose 7-phosphate + D-glyceraldehyde 3-phosphate = D-erythrose 4-phosphate + beta-D-fructose 6-phosphate. It participates in carbohydrate degradation; pentose phosphate pathway; D-glyceraldehyde 3-phosphate and beta-D-fructose 6-phosphate from D-ribose 5-phosphate and D-xylulose 5-phosphate (non-oxidative stage): step 2/3. Its function is as follows. Transaldolase is important for the balance of metabolites in the pentose-phosphate pathway. This is Transaldolase from Polaromonas sp. (strain JS666 / ATCC BAA-500).